Consider the following 158-residue polypeptide: NADH-quinone oxidoreductase subunit B (158 aa).

Positions 37, 38, 102, and 132 each coordinate [4Fe-4S] cluster.

This sequence belongs to the complex I 20 kDa subunit family. In terms of assembly, NDH-1 is composed of 14 different subunits. Subunits NuoB, C, D, E, F, and G constitute the peripheral sector of the complex. [4Fe-4S] cluster serves as cofactor.

It is found in the cell inner membrane. It catalyses the reaction a quinone + NADH + 5 H(+)(in) = a quinol + NAD(+) + 4 H(+)(out). Its function is as follows. NDH-1 shuttles electrons from NADH, via FMN and iron-sulfur (Fe-S) centers, to quinones in the respiratory chain. Couples the redox reaction to proton translocation (for every two electrons transferred, four hydrogen ions are translocated across the cytoplasmic membrane), and thus conserves the redox energy in a proton gradient. The sequence is that of NADH-quinone oxidoreductase subunit B from Methylobacillus flagellatus (strain ATCC 51484 / DSM 6875 / VKM B-1610 / KT).